The chain runs to 436 residues: Succinyl-CoA:glutarate CoA-transferase (436 aa).

A mitochondrion-targeting transit peptide spans 1–8 (MLWMLARA). The Nucleophile role is filled by Asp203. Residues Lys392 and Lys423 each carry the N6-acetyllysine modification.

Belongs to the CoA-transferase III family.

The protein localises to the mitochondrion. It catalyses the reaction glutarate + succinyl-CoA = glutaryl-CoA + succinate. It carries out the reaction 3-hydroxy-3-methylglutarate + succinyl-CoA = (3S)-3-hydroxy-3-methylglutaryl-CoA + succinate. The enzyme catalyses 3-hydroxy-3-methylglutarate + glutaryl-CoA = (3S)-3-hydroxy-3-methylglutaryl-CoA + glutarate. The catalysed reaction is hexanedioate + glutaryl-CoA = hexanedioyl-CoA + glutarate. It catalyses the reaction itaconate + glutaryl-CoA = itaconyl-CoA + glutarate. It carries out the reaction itaconate + succinyl-CoA = itaconyl-CoA + succinate. In terms of biological role, coenzyme A (CoA) transferase that reversibly catalyzes the transfer of a CoA moiety from a dicarboxyl-CoA to a dicarboxylate in a metabolite recycling process. Displays preference for succinyl-CoA and glutarate-CoA as dicarboxyl-CoA donors and glutarate, succinate, adipate/hexanedioate, itaconate and 3-hydroxy-3-methylglutarate as dicarboxylate acceptors. Acts on intermediates or end products of lysine and tryptophan degradation pathway, in particular catalyzes succinyl-CoA-dependent reesterification of free glutarate into glutaryl-CoA to prevent renal excretion of glutarate. Upon inflammation, may convert macrophage-derived itaconate to itaconyl-CoA in erythroid precursors where it negatively regulates the TCA cycle and heme synthesis to limit erythroid differentiation in the context of stress erythropoiesis. This Mus musculus (Mouse) protein is Succinyl-CoA:glutarate CoA-transferase.